The primary structure comprises 244 residues: B3 domain-containing protein At2g36080 (244 aa).

Residues 38 to 144 (FEKPLTPSDV…RFFIGWRRRG (107 aa)) constitute a DNA-binding region (TF-B3).

The protein resides in the nucleus. The protein is B3 domain-containing protein At2g36080 (ARF31) of Arabidopsis thaliana (Mouse-ear cress).